Consider the following 353-residue polypeptide: Keratocan (353 aa).

Positions 1-21 (MMTLKVCPSLLLLFLVHSVWT) are cleaved as a signal peptide. The LRRNT domain occupies 34–72 (EHWSHYTFECPQECFCPPSFPNALYCDNKGLKEIPAIPA). Intrachain disulfides connect C43–C49 and C47–C59. 8 LRR repeats span residues 73–94 (RIWY…PFVN), 97–118 (HLRW…SGVL), 123–143 (RLLY…PLPV), 144–165 (GLEQ…VFSN), 168–188 (NLTM…QSDT), 194–214 (SLMQ…SIPA), 215–236 (NTLQ…YFSA), and 239–259 (KVTF…PPNG). N94 carries N-linked (GlcNAc...) (keratan sulfate) asparagine glycosylation. An N-linked (GlcNAc...) asparagine glycan is attached at N168. N-linked (GlcNAc...) (keratan sulfate) asparagine glycosylation occurs at N223. Residue N261 is glycosylated (N-linked (GlcNAc...) (keratan sulfate) asparagine). LRR repeat units follow at residues 264 to 283 (SILD…PINA) and 284 to 305 (HLEH…QICP). An N-linked (GlcNAc...) asparagine glycan is attached at N299. C304 and C344 are oxidised to a cystine.

The protein belongs to the small leucine-rich proteoglycan (SLRP) family. SLRP class II subfamily. Cornea.

It is found in the secreted. The protein resides in the extracellular space. It localises to the extracellular matrix. Its function is as follows. Plays an important role in generating and maintaining a transparent matrix within the corneal stroma. This Coturnix japonica (Japanese quail) protein is Keratocan (KERA).